The sequence spans 258 residues: Phosphatidylglycerol--prolipoprotein diacylglyceryl transferase (258 aa).

7 consecutive transmembrane segments (helical) span residues 9-29, 53-73, 90-110, 117-139, 169-189, 198-218, and 230-250; these read ILIQ…ATGF, LLTY…TLIY, EGGL…WLFV, KFLW…IRLG, PVQL…LMLF, GFLF…IEYF, and LISV…VLML. R137 contacts a 1,2-diacyl-sn-glycero-3-phospho-(1'-sn-glycerol).

The protein belongs to the Lgt family.

The protein resides in the cell inner membrane. The enzyme catalyses L-cysteinyl-[prolipoprotein] + a 1,2-diacyl-sn-glycero-3-phospho-(1'-sn-glycerol) = an S-1,2-diacyl-sn-glyceryl-L-cysteinyl-[prolipoprotein] + sn-glycerol 1-phosphate + H(+). It functions in the pathway protein modification; lipoprotein biosynthesis (diacylglyceryl transfer). Catalyzes the transfer of the diacylglyceryl group from phosphatidylglycerol to the sulfhydryl group of the N-terminal cysteine of a prolipoprotein, the first step in the formation of mature lipoproteins. In Tolumonas auensis (strain DSM 9187 / NBRC 110442 / TA 4), this protein is Phosphatidylglycerol--prolipoprotein diacylglyceryl transferase.